The following is a 495-amino-acid chain: MPSFQPIEAPKCPRCGKSVYAAEERLAGGYVFHKNCFKCGMCNKSLDSTNCTEHERELYCKTCHGRKFGPKGYGFGTGAGTLSMDNGSQFLRENGDVPSVRNGARLEPRAIARAPEGEGCPRCGGYVYAAEQMLARGRSWHKECFKCGTCKKGLDSILCCEAPDKNIYCKGCYAKKFGPKGYGYGQGGGALQSDCYAHDDGAPQIRAAIDVDKIQARPGEGCPRCGGVVYAAEQKLSKGREWHKKCFNCKDCHKTLDSINASDGPDRDVYCRTCYGKKWGPHGYGFACGSGFLQTDGLTEDQISANRPFYNPDTTSIKARDGEGCPRCGGAVFAAEQQLSKGKVWHKKCYNCADCHRPLDSVLACDGPDGDIHCRACYGKLFGPKGFGYGHAPTLVSTSGESTIQFPDGRPLAGPKTSGGCPRCGFAVFAAEQMISKTRIWHKRCFYCSDCRKSLDSTNLNDGPDGDIYCRACYGRNFGPKGVGYGLGAGALTTF.

The 52-residue stretch at 12–63 folds into the LIM zinc-binding 1 domain; sequence CPRCGKSVYAAEERLAGGYVFHKNCFKCGMCNKSLDSTNCTEHERELYCKTC. The Nuclear localization signal motif lies at 66-71; it reads RKFGPK. The region spanning 120 to 172 is the LIM zinc-binding 2 domain; it reads CPRCGGYVYAAEQMLARGRSWHKECFKCGTCKKGLDSILCCEAPDKNIYCKGC. The Nuclear localization signal motif lies at 175–180; sequence KKFGPK. 3 consecutive LIM zinc-binding domains span residues 222-274, 325-377, and 421-473; these read CPRC…CRTC and CPRC…CRAC.

As to expression, in the embryo, expression is restricted to the somatic, visceral, and pharyngeal muscles. Within the somatic musculature, expression is localized at the ends of muscles fibers at the point of attachment to the epidermis (at protein level). There is no expression in cardiac mesoderm or in fat body.

The protein resides in the cytoplasm. The protein localises to the nucleus. Its function is as follows. Plays a role in cell differentiation late in myogenesis. Transcription factor Mef2 is essential for expression. The polypeptide is Muscle LIM protein Mlp84B (Drosophila melanogaster (Fruit fly)).